Here is a 185-residue protein sequence, read N- to C-terminus: HTH-type transcriptional regulator Hpr (185 aa).

In terms of domain architecture, HTH marR-type spans 13–157 (AMIFSQRIAQ…LIAILRNIYG (145 aa)). The H-T-H motif DNA-binding region spans 63–86 (ISEIAKFGVMHVSTAFNFSKKLEE).

Homodimer.

Negative regulator of protease production and sporulation. This is HTH-type transcriptional regulator Hpr from Bacillus anthracis (strain CDC 684 / NRRL 3495).